Reading from the N-terminus, the 148-residue chain is Large ribosomal subunit protein bL9 (148 aa).

The protein belongs to the bacterial ribosomal protein bL9 family.

Binds to the 23S rRNA. This is Large ribosomal subunit protein bL9 from Pseudomonas aeruginosa (strain LESB58).